The primary structure comprises 224 residues: MKTDRVSTGSTAFDDLLGGGLERRAITQIYGEPASGKSTLCLMAAVATLRAGNSVVYIDTEGFSVERFTQIAGENAGTLADRLYLFEPLDFAQQGTMIADAEGLLKNGHAPVGLLVMDSATALYRTELDLGREAIRKLSHHMIKLLGLAKKYDIPVLITNQIYMDVERDRVAGLGGTALEHLSKAIIRLEKKDSARRAMLRKHRSRPEGLSFDFTITEDGIRTV.

The protein belongs to the eukaryotic RecA-like protein family. RadB subfamily.

Functionally, involved in DNA repair and in homologous recombination. May regulate the cleavage reactions of the branch-structured DNA. Has a very weak ATPase activity that is not stimulated by DNA. Binds DNA but does not promote DNA strands exchange. This Methanoculleus marisnigri (strain ATCC 35101 / DSM 1498 / JR1) protein is DNA repair and recombination protein RadB.